Reading from the N-terminus, the 362-residue chain is GID complex substrate-recognition subunit 4 (362 aa).

Disordered stretches follow at residues 1–40 (MINNPKVDSVAEKPKAVTSKQSEQAASPEPTPAPPVSRNQ) and 240–267 (STDDNGTTNAAKKLPPQQLPTTPSADAG). A Glycyl lysine isopeptide (Lys-Gly) (interchain with G-Cter in ubiquitin) cross-link involves residue Lys-20. Ser-27 is subject to Phosphoserine. Positions 240-249 (STDDNGTTNA) are enriched in polar residues.

This sequence belongs to the GID4/VID24 family. In terms of assembly, substrate-recognition component of the GID/CTLH ubiquitin ligase complex. In the absence of stress, the complex exists as an inactive anticipatory complex (GID(Ant)), composed of VID30/GID1, the E3 ubiquitin-ligase RMD5/GID2, VID28/GID5, GID8, and the RING-like subunit FYV10/GID9, awaiting a substrate receptor to form the active E3 ligase complex. When cells are shifted to glucose-containing medium, the substrate receptor VID24/GID4 is induced and becomes part of the complex, named GID(SR4). Additionally, GID7 transforms the GID(SR4) E3 ligase core into a higher-order supramolecular assembly (Chelator-GID(SR4)) specifically tailored for FBP1 ubiquitination. Under osmotic or heat stress, the substrate receptor GID10 is induced and becomes part of the complex, named GID(SR10). Within the complex, VVID24/GID4 is recruited to the complex via interaction with VID28/GID5. Interacts with proteins that have an N-terminal Pro/N-degron, including FBP1, ICL1 and MDH2. Post-translationally, ubiquitinated by the GID complex, leading to subsequent proteasomal degradation.

The protein localises to the cytoplasmic vesicle membrane. Functionally, substrate-recognition component of the GID E3 ligase complex recruiting N termini and catalyzing ubiquitination of proteins targeted for degradation. GID E3 is regulated through assembly with interchangeable N-degron-binding substrate receptors induced by distinct environmental perturbations. Required for the adaptation to the presence of glucose in the growth medium; mediates the degradation of enzymes involved in gluconeogenesis when cells are shifted to glucose-containing medium. Required for proteasome-dependent catabolite degradation of fructose-1,6-bisphosphatase (FBP1), malate dehydrogenase (MDH2), and other gluconeogenic enzymes, probably by targeting FBP1-containing vesicles to the vacuole, but is not required for FBP1 sequestration in cytoplasmic vesicles. Specific for substrates with an N-terminal Pro (Pro/N-degron), including FBP1, ICL1 and MDH2. Has high affinity for the N-terminal sequence Pro-Thr-Leu-Val, and can bind peptides with an N-terminal sequence of the type Pro-[Gly,Ala,Ser,Thr,Asp,Asn,Tyr,His]-[Ala,Val,Leu,Ile,Lys,Arg]-[Val,Cys,Pro,Leu,Ile,Trp]. Also recognizes nonproline N-terminal residues and targets an Ile-Gly-Lys-Trp-bearing protein for rapid degradation. This Saccharomyces cerevisiae (strain ATCC 204508 / S288c) (Baker's yeast) protein is GID complex substrate-recognition subunit 4.